Reading from the N-terminus, the 173-residue chain is MTTQTSAATGSPTQQNNAALADMDSMDRQLLDIIQTGFPLSPRPYAELGQRLGLDEQEVLDRVRGLKARKIIRRLGANFQSAKLGFVSTLCAAKVPQDKMDAFVAEVNAKPGVTHNYLREHDYNIWFTLISPSREETQAILDGITQATGVPILNLPATKLFKIRVDFRMDNDS.

The substrate site is built by His-115 and Arg-119.

It belongs to the Ahb/Nir family. As to quaternary structure, forms a heterodimer composed of AhbA and AhbB.

The enzyme catalyses siroheme + 2 H(+) = 12,18-didecarboxysiroheme + 2 CO2. It participates in porphyrin-containing compound metabolism; protoheme biosynthesis. In terms of biological role, involved in siroheme-dependent heme b biosynthesis. Catalyzes the decarboxylation of siroheme into didecarboxysiroheme. Siroheme is decarboxylated to monodecarboxysiroheme, which is in turn decarboxylated to didecarboxysiroheme. The protein is Siroheme decarboxylase alpha subunit of Desulfovibrio desulfuricans (strain ATCC 27774 / DSM 6949 / MB).